A 102-amino-acid chain; its full sequence is Small ribosomal subunit protein uS10c (102 aa).

The protein belongs to the universal ribosomal protein uS10 family. In terms of assembly, part of the 30S ribosomal subunit.

Its subcellular location is the plastid. It localises to the chloroplast. Involved in the binding of tRNA to the ribosomes. The protein is Small ribosomal subunit protein uS10c of Guillardia theta (Cryptophyte).